The primary structure comprises 241 residues: Chloride intracellular channel protein 1 (241 aa).

An N-acetylalanine modification is found at Ala-2. Residues 2–90 (AEEQPQVELF…EEFLEAVLCP (89 aa)) are required for insertion into the membrane. An N6-acetyllysine modification is found at Lys-13. The short motif at 24–27 (CPFS) is the G-site element. Cys-24 and Cys-59 are disulfide-bonded. The helical transmembrane segment at 26 to 46 (FSQRLFMVLWLKGVTFNVTTV) threads the bilayer. The region spanning 93-233 (YPKLAALNPE…PDDEEIELAY (141 aa)) is the GST C-terminal domain. Lys-119 carries the post-translational modification N6-acetyllysine. Ser-121 is subject to Phosphoserine. An N6-acetyllysine modification is found at Lys-131. Phosphoserine occurs at positions 156 and 211. Phosphotyrosine is present on Tyr-233.

This sequence belongs to the chloride channel CLIC family. In terms of assembly, monomer. Homodimer (in vitro). Interacts with TRAPPC2. Dimerization requires a conformation change that leads to the exposure of a large hydrophobic surface. In vivo, this may lead to membrane insertion. As to expression, expressed in neonatal and adult cardiomyocytes (at protein level).

Its subcellular location is the nucleus. It is found in the nucleus membrane. It localises to the cytoplasm. The protein resides in the cell membrane. The protein localises to the endoplasmic reticulum. It catalyses the reaction L-dehydroascorbate + 2 glutathione = glutathione disulfide + L-ascorbate. The catalysed reaction is chloride(in) = chloride(out). The enzyme catalyses iodide(out) = iodide(in). It carries out the reaction thiocyanate(in) = thiocyanate(out). It catalyses the reaction nitrate(in) = nitrate(out). The catalysed reaction is bromide(in) = bromide(out). The enzyme catalyses fluoride(in) = fluoride(out). In the soluble state, catalyzes glutaredoxin-like thiol disulfide exchange reactions with reduced glutathione as electron donor. Reduces selenite and dehydroascorbate and may act as an antioxidant during oxidative stress response. Can insert into membranes and form voltage-dependent multi-ion conductive channels. Membrane insertion seems to be redox-regulated and may occur only under oxidizing conditions. Involved in regulation of the cell cycle. The sequence is that of Chloride intracellular channel protein 1 from Rattus norvegicus (Rat).